Reading from the N-terminus, the 173-residue chain is Probable capsid assembly scaffolding protein (173 aa).

The segment at 1–30 (MSDTATTEGTPAGDPTPVVTDKPLEPTPKT) is disordered. The stretch at 36 to 56 (VKELRQEAAAARVAKKDAVEA) forms a coiled coil.

This sequence belongs to the L5likevirus scaffolding protein family.

Functionally, scaffolding protein involved in the icosahedric procapsid assembly. Coassembles with the capsid proteins to form the procapsid, in which the scaffolding protein is found within the external shell of icosahedrally arranged capsid protein subunits. The polypeptide is Probable capsid assembly scaffolding protein (16) (Mycobacterium (Mycobacteriophage D29)).